The following is a 122-amino-acid chain: Ribosome-binding factor A (122 aa).

Belongs to the RbfA family. In terms of assembly, monomer. Binds 30S ribosomal subunits, but not 50S ribosomal subunits or 70S ribosomes.

The protein localises to the cytoplasm. One of several proteins that assist in the late maturation steps of the functional core of the 30S ribosomal subunit. Associates with free 30S ribosomal subunits (but not with 30S subunits that are part of 70S ribosomes or polysomes). Required for efficient processing of 16S rRNA. May interact with the 5'-terminal helix region of 16S rRNA. The chain is Ribosome-binding factor A from Albidiferax ferrireducens (strain ATCC BAA-621 / DSM 15236 / T118) (Rhodoferax ferrireducens).